We begin with the raw amino-acid sequence, 1106 residues long: Probable NAD-specific glutamate dehydrogenase (1106 aa).

Residue K654 is part of the active site.

Belongs to the Glu/Leu/Phe/Val dehydrogenases family. Homotetramer.

The protein localises to the cytoplasm. It catalyses the reaction L-glutamate + NAD(+) + H2O = 2-oxoglutarate + NH4(+) + NADH + H(+). NAD(+)-dependent glutamate dehydrogenase which degrades glutamate to ammonia and alpha-ketoglutarate. This Schizosaccharomyces pombe (strain 972 / ATCC 24843) (Fission yeast) protein is Probable NAD-specific glutamate dehydrogenase (gdh2).